Reading from the N-terminus, the 20-residue chain is Catechol 1,2-dioxygenase (20 aa).

It belongs to the intradiol ring-cleavage dioxygenase family. Homodimer which dissociates into active monomeric subunits at high ionic strengths. The cofactor is Fe(3+).

The enzyme catalyses catechol + O2 = cis,cis-muconate + 2 H(+). The protein operates within aromatic compound metabolism; beta-ketoadipate pathway; 5-oxo-4,5-dihydro-2-furylacetate from catechol: step 1/3. In Acinetobacter radioresistens, this protein is Catechol 1,2-dioxygenase.